Reading from the N-terminus, the 233-residue chain is Auxin-responsive protein IAA11 (233 aa).

Disordered stretches follow at residues Met-1–Gly-27 and Pro-46–Gln-100. The short motif at Leu-11–Leu-15 is the EAR-like (transcriptional repression) element. Residues Gly-54–Asp-63 show a composition bias toward acidic residues. The region spanning Ala-122 to Gly-217 is the PB1 domain.

It belongs to the Aux/IAA family. Homodimers and heterodimers. As to expression, highly expressed in etiolated shoots. Expressed in roots.

It localises to the nucleus. Aux/IAA proteins are short-lived transcriptional factors that function as repressors of early auxin response genes at low auxin concentrations. The protein is Auxin-responsive protein IAA11 (IAA11) of Oryza sativa subsp. japonica (Rice).